Here is a 283-residue protein sequence, read N- to C-terminus: tRNA (guanine-N(1)-)-methyltransferase (283 aa).

S-adenosyl-L-methionine-binding positions include Gly113 and 133-138 (IGDYVL).

This sequence belongs to the RNA methyltransferase TrmD family. As to quaternary structure, homodimer.

Its subcellular location is the cytoplasm. It carries out the reaction guanosine(37) in tRNA + S-adenosyl-L-methionine = N(1)-methylguanosine(37) in tRNA + S-adenosyl-L-homocysteine + H(+). Specifically methylates guanosine-37 in various tRNAs. This is tRNA (guanine-N(1)-)-methyltransferase from Parafrankia sp. (strain EAN1pec).